Consider the following 263-residue polypeptide: Ribonuclease HII (263 aa).

One can recognise an RNase H type-2 domain in the interval 71–262 (QAIAGIDEVG…VKSMCCDSTN (192 aa)). Residues D77, E78, and D172 each contribute to the a divalent metal cation site.

The protein belongs to the RNase HII family. It depends on Mn(2+) as a cofactor. Requires Mg(2+) as cofactor.

Its subcellular location is the cytoplasm. The catalysed reaction is Endonucleolytic cleavage to 5'-phosphomonoester.. In terms of biological role, endonuclease that specifically degrades the RNA of RNA-DNA hybrids. This is Ribonuclease HII from Streptococcus pyogenes serotype M4 (strain MGAS10750).